A 148-amino-acid chain; its full sequence is Large ribosomal subunit protein uL15 (148 aa).

Positions 1–40 (MADILQMHDLKPAPGANKDRIRVGRGEGSKGKTSGRGDKG) are enriched in basic and acidic residues. Residues 1–47 (MADILQMHDLKPAPGANKDRIRVGRGEGSKGKTSGRGDKGTKKRYQV) form a disordered region.

This sequence belongs to the universal ribosomal protein uL15 family. Part of the 50S ribosomal subunit.

Binds to the 23S rRNA. The protein is Large ribosomal subunit protein uL15 of Bifidobacterium adolescentis (strain ATCC 15703 / DSM 20083 / NCTC 11814 / E194a).